A 92-amino-acid chain; its full sequence is Anti-restriction endonuclease (92 aa).

Its function is as follows. Pays a role in the inhibition of the host restriction-modification system. Strongly inhibits the host mcrA endonuclease that cleaves 5-methyl and 5-hydroxymethylcytosines at the specific DNA sequence C(me)CGG. The protein is Anti-restriction endonuclease (arn) of Enterobacteria phage T4 (Bacteriophage T4).